The sequence spans 312 residues: Gamma-soluble NSF attachment protein (312 aa).

The disordered stretch occupies residues 281 to 312 (KKKSPATPQAKPDGVTATAADEEEDEYSGGLC). Serine 284 bears the Phosphoserine mark. Threonine 287 bears the Phosphothreonine mark. Acidic residues predominate over residues 300-312 (ADEEEDEYSGGLC). Phosphoserine is present on serine 308.

The protein belongs to the SNAP family. As to quaternary structure, interacts with RAB11FIP5. Interacts with VTI1A.

Its subcellular location is the membrane. The protein localises to the golgi apparatus. Functionally, required for vesicular transport between the endoplasmic reticulum and the Golgi apparatus. This is Gamma-soluble NSF attachment protein from Homo sapiens (Human).